Reading from the N-terminus, the 344-residue chain is tRNA dimethylallyltransferase (344 aa).

Residue 43–50 (GPTCCGKS) coordinates ATP. 45 to 50 (TCCGKS) is a binding site for substrate. The interaction with substrate tRNA stretch occupies residues 68-71 (DSMQ).

It belongs to the IPP transferase family. As to quaternary structure, monomer. It depends on Mg(2+) as a cofactor.

The catalysed reaction is adenosine(37) in tRNA + dimethylallyl diphosphate = N(6)-dimethylallyladenosine(37) in tRNA + diphosphate. Functionally, catalyzes the transfer of a dimethylallyl group onto the adenine at position 37 in tRNAs that read codons beginning with uridine, leading to the formation of N6-(dimethylallyl)adenosine (i(6)A). The sequence is that of tRNA dimethylallyltransferase from Protochlamydia amoebophila (strain UWE25).